The primary structure comprises 262 residues: LOB domain-containing protein 18 (262 aa).

One can recognise an LOB domain in the interval 36–138 (GPCGACKFLR…AEVSYLQAHL (103 aa)). Residues 223-262 (VGLGGENSHDLQALAHELLHRQGSPPPAATDHSPSRTMSR) are disordered.

Belongs to the LOB domain-containing protein family. In terms of assembly, homodimer and heterodimer with LBD16. Interacts with GIP1. In terms of tissue distribution, expressed in roots, stems, leaves and flowers. Expressed in vascular tissues of hypocotyls, leaves, roots, developing floral organs and siliques.

The protein localises to the nucleus. In terms of biological role, involved in the positive regulation of tracheary element (TE) differentiation. Involved in a positive feedback loop that maintains or promotes NAC030/VND7 expression that regulates TE differentiation-related genes. Functions in the initiation and emergence of lateral roots, in conjunction with LBD16, downstream of ARF7 and ARF19. Transcriptional activator that directly regulates EXPA14, a gene encoding a cell wall-loosening factor that promotes lateral root emergence. Activates EXPA14 by directly binding to a specific region of its promoter. Transcriptional activator that directly regulates EXPA17, a gene encoding a cell wall-loosening factor that promotes lateral root emergence. Acts downstream of the auxin influx carriers AUX1 and LAX1 in the regulation of lateral root initiation and development. In Arabidopsis thaliana (Mouse-ear cress), this protein is LOB domain-containing protein 18 (LBD18).